A 35-amino-acid chain; its full sequence is Natriuretic peptide TNPb (35 aa).

A disulfide bond links C9 and C25.

Expressed by the venom gland.

The protein localises to the secreted. Functionally, snake venom natriuretic peptide that exhibits vasoactive and probable hypotensive activity. Is only weakly active on natriuretic peptide receptor-C (NPR3). Stimulates cGMP production through the natriuretic peptide receptor 1 (NPR1) with moderate potencies for the rat NPR1 (EC(50)=1200 nM), and very weak potencies over human NPR1 (30% activation at 10 uM). In vivo, does not impact systolic and diastolic blood pressure, as well as heart rate, when intravenously injected in conscious rabbits. Does not affect the bradycardia due to cardiac afferent stimulation (Bezold-Jarisch reflex). The polypeptide is Natriuretic peptide TNPb (Oxyuranus microlepidotus (Inland taipan)).